The chain runs to 175 residues: Gamma-crystallin B (175 aa).

Beta/gamma crystallin 'Greek key' domains are found at residues 2–40 and 41–83; these read GKIT…RVDS and GCWM…RLIP. The tract at residues 84–88 is connecting peptide; it reads QHSGT. Beta/gamma crystallin 'Greek key' domains follow at residues 89-129 and 130-172; these read FRMR…NVLD and GCWV…RRVM.

Belongs to the beta/gamma-crystallin family. As to quaternary structure, monomer.

In terms of biological role, crystallins are the dominant structural components of the vertebrate eye lens. The polypeptide is Gamma-crystallin B (CRYGB) (Canis lupus familiaris (Dog)).